We begin with the raw amino-acid sequence, 173 residues long: MQTPPVKDGPRINEDIRVPRVLLIDHNGEKQGEMPISAALEAAEEAGLDLVEIVPNANPPVCKILDYGKFKFQEQKKKNEARKRQKIVELKEIKLRPNIDIHDYDVKAKSMHRFFEEGDKVKVTLRFRGREMAHPELGMKLLLKVKADFDEIAKVEYEPRMEGRQMIMILAPR.

It belongs to the IF-3 family. As to quaternary structure, monomer.

The protein resides in the cytoplasm. Its function is as follows. IF-3 binds to the 30S ribosomal subunit and shifts the equilibrium between 70S ribosomes and their 50S and 30S subunits in favor of the free subunits, thus enhancing the availability of 30S subunits on which protein synthesis initiation begins. This chain is Translation initiation factor IF-3, found in Caulobacter sp. (strain K31).